The primary structure comprises 565 residues: Carboxylesterase 1D (565 aa).

Residues 1-18 (MGLYPLIWLSLAACTAWG) form the signal peptide. Residue asparagine 79 is glycosylated (N-linked (GlcNAc...) asparagine). A disulfide bond links cysteine 87 and cysteine 116. The active-site Acyl-ester intermediate is serine 221. A disulfide bond links cysteine 273 and cysteine 284. The Charge relay system role is filled by glutamate 353. Lysine 382 carries the post-translational modification N6-succinyllysine. The active-site Charge relay system is the histidine 466. Asparagine 489 carries N-linked (GlcNAc...) asparagine glycosylation. The Prevents secretion from ER motif lies at 562-565 (HVEL).

The protein belongs to the type-B carboxylesterase/lipase family. As to quaternary structure, homotrimer. As to expression, highest expression occurs in liver with lower levels in adipose tissue, kidney, heart, intestine, lung, testis and thymus.

It is found in the endoplasmic reticulum lumen. It localises to the cytoplasm. Its subcellular location is the cytosol. The protein localises to the lipid droplet. The protein resides in the microsome. The enzyme catalyses a carboxylic ester + H2O = an alcohol + a carboxylate + H(+). It carries out the reaction a long-chain fatty acyl ethyl ester + H2O = a long-chain fatty acid + ethanol + H(+). The catalysed reaction is all-trans-retinyl hexadecanoate + H2O = all-trans-retinol + hexadecanoate + H(+). Functionally, major lipase in white adipose tissue. Involved in the metabolism of xenobiotics and of natural substrates. Hydrolyzes triacylglycerols and monoacylglycerols, with a preference for monoacylglycerols. The susceptibility of the substrate increases with decreasing acyl chain length of the fatty acid moiety. Catalyzes the synthesis of fatty acid ethyl esters. Hydrolyzes retinyl esters. This Mus musculus (Mouse) protein is Carboxylesterase 1D.